The sequence spans 1414 residues: DNA-directed RNA polymerase subunit beta' (1414 aa).

Residues C70, C72, C85, and C88 each coordinate Zn(2+). Mg(2+) contacts are provided by D460, D462, and D464. Residues C814, C888, C895, and C898 each coordinate Zn(2+). Residues 1378-1414 (EREAARQLANPFEDAPVTVGGEPEAPAADTPSDDSAE) are disordered.

This sequence belongs to the RNA polymerase beta' chain family. The RNAP catalytic core consists of 2 alpha, 1 beta, 1 beta' and 1 omega subunit. When a sigma factor is associated with the core the holoenzyme is formed, which can initiate transcription. Mg(2+) is required as a cofactor. It depends on Zn(2+) as a cofactor.

The catalysed reaction is RNA(n) + a ribonucleoside 5'-triphosphate = RNA(n+1) + diphosphate. Functionally, DNA-dependent RNA polymerase catalyzes the transcription of DNA into RNA using the four ribonucleoside triphosphates as substrates. In Bordetella bronchiseptica (strain ATCC BAA-588 / NCTC 13252 / RB50) (Alcaligenes bronchisepticus), this protein is DNA-directed RNA polymerase subunit beta'.